A 196-amino-acid polypeptide reads, in one-letter code: uncharacterized protein (196 aa).

Over residues 122-135 the composition is skewed to basic and acidic residues; sequence SEIEKKQEPIERKT. Residues 122-150 are disordered; the sequence is SEIEKKQEPIERKTSTTTNTESNQEKPLR.

This is an uncharacterized protein from Leptospira interrogans.